A 502-amino-acid chain; its full sequence is Glutamate--tRNA ligase (502 aa).

A 'HIGH' region motif is present at residues 9-19; the sequence is PSPTGFPHVGT. The 'KMSKS' region signature appears at 250–254; the sequence is KLSKR. Residue lysine 253 participates in ATP binding.

Belongs to the class-I aminoacyl-tRNA synthetase family. Glutamate--tRNA ligase type 1 subfamily. Monomer.

It localises to the cytoplasm. It carries out the reaction tRNA(Glu) + L-glutamate + ATP = L-glutamyl-tRNA(Glu) + AMP + diphosphate. Catalyzes the attachment of glutamate to tRNA(Glu) in a two-step reaction: glutamate is first activated by ATP to form Glu-AMP and then transferred to the acceptor end of tRNA(Glu). The chain is Glutamate--tRNA ligase from Acinetobacter baumannii (strain SDF).